Reading from the N-terminus, the 270-residue chain is Sulfur carrier protein FdhD (270 aa).

Cysteine 108 (cysteine persulfide intermediate) is an active-site residue. Mo-bis(molybdopterin guanine dinucleotide) is bound at residue 247–252 (FIRDGR).

This sequence belongs to the FdhD family.

The protein localises to the cytoplasm. Functionally, required for formate dehydrogenase (FDH) activity. Acts as a sulfur carrier protein that transfers sulfur from IscS to the molybdenum cofactor prior to its insertion into FDH. The sequence is that of Sulfur carrier protein FdhD from Halalkalibacterium halodurans (strain ATCC BAA-125 / DSM 18197 / FERM 7344 / JCM 9153 / C-125) (Bacillus halodurans).